We begin with the raw amino-acid sequence, 332 residues long: Cysteine and histidine-rich domain-containing protein 1 (332 aa).

A2 carries the post-translational modification N-acetylalanine. Residues 2–77 are interaction with PPP5C; the sequence is ALLCYNRACG…KPPEPVKPEV (76 aa). Zn(2+) is bound by residues C5, C10, C24, H27, C42, and C43. 2 CHORD domains span residues 5-64 and 157-216; these read CYNR…KGRH and CKNG…KGRH. T47 carries the phosphothreonine modification. The residue at position 51 (S51) is a Phosphoserine. 10 residues coordinate Zn(2+): C59, H64, C157, C162, C176, H179, C194, C195, C211, and H216. The interval 62 to 82 is disordered; it reads GRHNSEKPPEPVKPEVKTTEK. Positions 64–82 are enriched in basic and acidic residues; that stretch reads HNSEKPPEPVKPEVKTTEK. The segment at 65-316 is interaction with HSP90AA1 and HSP90AB1; it reads NSEKPPEPVK…AEPMQWASLE (252 aa). Residues 227–316 enclose the CS domain; sequence VVPCRHDWHQ…AEPMQWASLE (90 aa).

As to quaternary structure, interacts with HSP90AA1, HSP90AB1, PPP5C, ROCK1 and ROCK2.

In terms of biological role, regulates centrosome duplication, probably by inhibiting the kinase activity of ROCK2. Proposed to act as co-chaperone for HSP90. May play a role in the regulation of NOD1 via a HSP90 chaperone complex. In vitro, has intrinsic chaperone activity. This function may be achieved by inhibiting association of ROCK2 with NPM1. Plays a role in ensuring the localization of the tyrosine kinase receptor EGFR to the plasma membrane, and thus ensures the subsequent regulation of EGFR activity and EGF-induced actin cytoskeleton remodeling. Involved in stress response. Prevents tumorigenesis. The chain is Cysteine and histidine-rich domain-containing protein 1 (CHORDC1) from Macaca fascicularis (Crab-eating macaque).